Consider the following 155-residue polypeptide: SsrA-binding protein (155 aa).

The protein belongs to the SmpB family.

The protein localises to the cytoplasm. Required for rescue of stalled ribosomes mediated by trans-translation. Binds to transfer-messenger RNA (tmRNA), required for stable association of tmRNA with ribosomes. tmRNA and SmpB together mimic tRNA shape, replacing the anticodon stem-loop with SmpB. tmRNA is encoded by the ssrA gene; the 2 termini fold to resemble tRNA(Ala) and it encodes a 'tag peptide', a short internal open reading frame. During trans-translation Ala-aminoacylated tmRNA acts like a tRNA, entering the A-site of stalled ribosomes, displacing the stalled mRNA. The ribosome then switches to translate the ORF on the tmRNA; the nascent peptide is terminated with the 'tag peptide' encoded by the tmRNA and targeted for degradation. The ribosome is freed to recommence translation, which seems to be the essential function of trans-translation. This Streptococcus pyogenes serotype M18 (strain MGAS8232) protein is SsrA-binding protein.